The sequence spans 584 residues: Tyrosine-protein kinase Dnt (584 aa).

The N-terminal stretch at 1–40 (MESVNKCGKSASTRNCTVKMSRKMWVLSLLALAALQLHSG) is a signal peptide. The Extracellular segment spans residues 41–208 (SEVAAHLNVF…LETVMLPPTG (168 aa)). The 132-residue stretch at 49 to 180 (VFLNPVEVMR…HLVFRRKKIC (132 aa)) folds into the WIF domain. N-linked (GlcNAc...) asparagine glycosylation is found at Asn124, Asn163, Asn168, and Asn183. Residues 209-229 (LITLVVGVSVAMGSVCLLLMI) form a helical membrane-spanning segment. The Cytoplasmic segment spans residues 230 to 584 (AYCVKGAANK…EFYSQITRYV (355 aa)). A disordered region spans residues 241–261 (QHHQHGGQPMRTSSFQRLNTH). Positions 250–261 (MRTSSFQRLNTH) are enriched in polar residues. A Protein kinase domain is found at 317-577 (VRLSSLLQEG…QLQSCLSEFY (261 aa)). ATP is bound by residues 323–331 (LQEGTFGRV) and Lys345. Residue Asp442 is the Proton acceptor of the active site. Tyr472 carries the phosphotyrosine; by autocatalysis modification.

This sequence belongs to the protein kinase superfamily. Tyr protein kinase family. In terms of tissue distribution, expressed in dynamic domains in the embryonic epidermis, many of which border on sites of epithelial invagination into the embryo interior, including ventral furrow, cephalic furrow, fore- and hindgut, optic lobe and tracheal pits. Later in embryogenesis, expression is seen in imaginal tissues.

Its subcellular location is the cell membrane. The catalysed reaction is L-tyrosyl-[protein] + ATP = O-phospho-L-tyrosyl-[protein] + ADP + H(+). Its function is as follows. May play an essential role in neuronal pathway recognition and ventral muscle attachment site selection. In Drosophila melanogaster (Fruit fly), this protein is Tyrosine-protein kinase Dnt (dnt).